A 322-amino-acid polypeptide reads, in one-letter code: MSKIVRVGAVQSEPVWLDLEGSVDKTISLIEKAAADGVNVLGFPEVWIPGYPWSMWTSAVINNSHIIHDYMNNSMRKDSPQMKRIQAAVKEAGMVVVLGYSERDGASLYMAQSFIDPSGEIVHHRRKIKPTHIERTIWGEGQAESLTCVIDSPFGKVGGLNCWEHLQPLLRYYEYSQGVQIHIASWPAEFEMPDPKKIAWLYHETGEASYRASQFFAIEGQAFVLVASQILTEANVERNNLTGNPVTKTPGGGFSMIFGPDGKPLCEPVDAGAEAILTADIDLRDIDKPKAFIDVVGHYARPDLLSLLVNPTVDKHVTTMKK.

The region spanning 5 to 283 is the CN hydrolase domain; that stretch reads VRVGAVQSEP…EAILTADIDL (279 aa). The Proton acceptor role is filled by Glu-45. The active site involves Lys-127. Residue Cys-162 is the Nucleophile of the active site.

The protein belongs to the carbon-nitrogen hydrolase superfamily. Nitrilase family.

The enzyme catalyses a nitrile + 2 H2O = a carboxylate + NH4(+). In terms of biological role, nitrilase that hydrolyzes preferentially 4-cyanopyridine. This chain is Nitrilase, found in Talaromyces marneffei (strain ATCC 18224 / CBS 334.59 / QM 7333) (Penicillium marneffei).